Here is a 1024-residue protein sequence, read N- to C-terminus: MIYIVNPILVKNNYIISNLYLLLIQEIIYNLRYYILFLNNNINVKFNFIYYKIIILLTNININSIDTIQNINNLLKIILTLKLNFININKIIKFNILIFILPFIYNNIIILNGLYKTCIQLFKKNNKIFIIKFKNNNKNIIYVYIYISLGLRIIFKISKLNIDCYFNNFKFNFLILLLYLNNIYINKNISLFIYNNIINKKILIYNYIKFIYSKYNNINNIISLKLFIIKLNKFNNIYINLLNILFSIKLNFSYYSDFYINNIYNKKFYSIIDNLLIKSKKYLKIFKYQLLNINRNIYNNITLLLNNKKYINIILENININPLVQYSDQVNNLSEINQKFKINMITTGLNSKFILNNDLRELPRNILGYISLINTNEGLTCGLVNYLTTNIFLNLKYLFVIYYKHIFYNRYNFKLLLNIFNKNFYNISFNNIYLKKNINFNKTTILTINKNTFKICNITQNIIYIPFNYLLSFIENLIPFIHYNDSIRNLMSIKMHTQIVPIIYPNLSNIITNYNFILNKYLNHLIISYQEGIVIYVSCIKIIIRDLFNRQIIYYLNNYKKINQNILLIYKPIVWVGEKVNIGQILAINSNLLNSEYSLGNNLLVGYGSYLGYEYEDAIIISRKILYNNLYTSLHLNIYEISLNIINNIPEICSINLSKMYYKNIKHLDKYGIIKEGTYILANNILISKLMFMPFIFNNKSLINIINFLFGSKLRIFKNKPIISTIHDIGRVIKIEILPNHLYNKTEKNNIYLKFRIYIGIQKYLQLGDKICNRHGHKGIISYISEINDIPYLNNKIQPDIFISAISIPSRINIGQIFEGIYGLNSLYLNTRYIISNNLNKNYYNNYNHIFNYYKYNYNNNFNINSKMSYNYNKYYLKNPFTGNMINNSICLNNIYYYKLIHMIKDKFRYRFIGLYSELTQQPIKGNTKQGGQRFGEMEVWALEAFGASYLFKEFFTYKSDDIKSRKILKNYLFNNYKIKNTFISETFKLILKELQSLAINIEAFCIFNDTNNLLENLPINIIY.

The protein belongs to the RNA polymerase beta chain family. As to quaternary structure, in plastids the minimal PEP RNA polymerase catalytic core is composed of four subunits: alpha, beta, beta', and beta''. When a (nuclear-encoded) sigma factor is associated with the core the holoenzyme is formed, which can initiate transcription (Potential).

Its subcellular location is the plastid. It localises to the apicoplast. It carries out the reaction RNA(n) + a ribonucleoside 5'-triphosphate = RNA(n+1) + diphosphate. Functionally, DNA-dependent RNA polymerase catalyzes the transcription of DNA into RNA using the four ribonucleoside triphosphates as substrates. This chain is DNA-directed RNA polymerase subunit beta (rpoB), found in Plasmodium falciparum (isolate 3D7).